The sequence spans 501 residues: Zinc finger C3HC-type protein 1 (501 aa).

Position 2 is an N-acetylalanine (alanine 2). Positions 21-73 are disordered; that stretch reads VVRSPEGTPQKVRELIDEGIVPEEGGTEPKDTAATFQSVDGSPQAEQSPLEST. Position 24 is a phosphoserine (serine 24). Residue threonine 28 is modified to Phosphothreonine. A compositionally biased stretch (polar residues) spans 54-72; sequence ATFQSVDGSPQAEQSPLES. 3 positions are modified to phosphoserine: serine 58, serine 62, and serine 68. A Phosphothreonine modification is found at threonine 84. The C3HC-type zinc-finger motif lies at 102 to 156; the sequence is CAKYGWVTVECDMLKCSSCQAFLCASLQPTFDFGRYKERCAELKKSLCSAHEKFC. The tract at residues 302–421 is disordered; the sequence is SPIPGVEGRP…TSPRSFFDPT (120 aa). Phosphoserine is present on residues serine 320 and serine 328. The span at 326 to 338 shows a compositional bias: polar residues; the sequence is TRSQDATVSPGSE. Residue threonine 332 is modified to Phosphothreonine. Phosphoserine is present on residues serine 334, serine 337, serine 343, serine 353, serine 358, serine 369, and serine 380. 2 stretches are compositionally biased toward polar residues: residues 350 to 359 and 369 to 383; these read RTRSWESSSP and SPTT…SMGT. Threonine 383 carries the post-translational modification Phosphothreonine. Phosphoserine is present on serine 394. The Nuclear localization signal motif lies at 395 to 401; that stretch reads PLRRTKR. Residues serine 406 and serine 482 each carry the phosphoserine modification. Positions 406–420 are enriched in low complexity; the sequence is SSSSSDTSPRSFFDP.

In terms of assembly, interacts with TPR; this interaction mediates ZC3HC1 nuclear envelopes (NE)-association but also required for proper positioning of a substantial amount of TPR at the nuclear basket (NB). Post-translationally, phosphorylated. May also be weakly phosphorylated on Tyr residues.

It is found in the nucleus. The protein localises to the nucleus envelope. In terms of biological role, required for proper positioning of a substantial amount of TPR at the nuclear basket (NB) through interaction with TPR. The protein is Zinc finger C3HC-type protein 1 (Zc3hc1) of Mus musculus (Mouse).